Here is a 321-residue protein sequence, read N- to C-terminus: Probable 3-hydroxyisobutyrate dehydrogenase, mitochondrial (321 aa).

Residues 23–52 (KTVG…IVFD), 86–87 (LP), and Thr-117 contribute to the NAD(+) site. Lys-192 is an active-site residue. Lys-267 is a binding site for NAD(+).

Belongs to the HIBADH-related family. 3-hydroxyisobutyrate dehydrogenase subfamily.

Its subcellular location is the mitochondrion. The enzyme catalyses 3-hydroxy-2-methylpropanoate + NAD(+) = 2-methyl-3-oxopropanoate + NADH + H(+). The protein operates within amino-acid degradation; L-valine degradation. This is Probable 3-hydroxyisobutyrate dehydrogenase, mitochondrial (hibA) from Dictyostelium discoideum (Social amoeba).